The chain runs to 126 residues: Fluoride-specific ion channel FluC (126 aa).

A run of 4 helical transmembrane segments spans residues 4 to 24 (FMLL…RYLI), 35 to 55 (GFPY…GVLM), 71 to 91 (IIGL…MDNV), and 104 to 124 (LNIL…FQLM). Residues glycine 78 and threonine 81 each coordinate Na(+).

Belongs to the fluoride channel Fluc/FEX (TC 1.A.43) family.

It localises to the cell inner membrane. The catalysed reaction is fluoride(in) = fluoride(out). With respect to regulation, na(+) is not transported, but it plays an essential structural role and its presence is essential for fluoride channel function. Its function is as follows. Fluoride-specific ion channel. Important for reducing fluoride concentration in the cell, thus reducing its toxicity. The protein is Fluoride-specific ion channel FluC of Aliivibrio salmonicida (strain LFI1238) (Vibrio salmonicida (strain LFI1238)).